The following is a 346-amino-acid chain: Serpentine receptor class beta-11 (346 aa).

Helical transmembrane passes span 26 to 46 (YQMIISFCSVFPLIYFLLFKL), 57 to 77 (TIFISYFVSLVAFSMTHLTTS), 102 to 122 (IWNFFILFFLTLSTFFPCSVT), 139 to 159 (SVVMGPILVGFNVLLNFCIIF), 186 to 206 (FTFFIIIFFVNLVDVIFDLIL), 239 to 259 (VFLILIHIISFGIYVSAVVFF), and 278 to 298 (TFSTTIVPTYNFVIGSFSSFF).

Belongs to the nematode receptor-like protein srb family.

The protein localises to the membrane. The chain is Serpentine receptor class beta-11 (srb-11) from Caenorhabditis elegans.